The sequence spans 162 residues: 2-C-methyl-D-erythritol 2,4-cyclodiphosphate synthase (162 aa).

Positions 12 and 14 each coordinate a divalent metal cation. Residues 12-14 and 38-39 contribute to the 4-CDP-2-C-methyl-D-erythritol 2-phosphate site; these read DVH and HS. H46 lines the a divalent metal cation pocket. 4-CDP-2-C-methyl-D-erythritol 2-phosphate contacts are provided by residues 60 to 62, 65 to 69, and R146; these read DIG and FPDTD.

Belongs to the IspF family. As to quaternary structure, homotrimer. The cofactor is a divalent metal cation.

It carries out the reaction 4-CDP-2-C-methyl-D-erythritol 2-phosphate = 2-C-methyl-D-erythritol 2,4-cyclic diphosphate + CMP. Its pathway is isoprenoid biosynthesis; isopentenyl diphosphate biosynthesis via DXP pathway; isopentenyl diphosphate from 1-deoxy-D-xylulose 5-phosphate: step 4/6. Functionally, involved in the biosynthesis of isopentenyl diphosphate (IPP) and dimethylallyl diphosphate (DMAPP), two major building blocks of isoprenoid compounds. Catalyzes the conversion of 4-diphosphocytidyl-2-C-methyl-D-erythritol 2-phosphate (CDP-ME2P) to 2-C-methyl-D-erythritol 2,4-cyclodiphosphate (ME-CPP) with a corresponding release of cytidine 5-monophosphate (CMP). This is 2-C-methyl-D-erythritol 2,4-cyclodiphosphate synthase from Bordetella avium (strain 197N).